Reading from the N-terminus, the 235-residue chain is Phosphoribosylaminoimidazole-succinocarboxamide synthase (235 aa).

It belongs to the SAICAR synthetase family.

It catalyses the reaction 5-amino-1-(5-phospho-D-ribosyl)imidazole-4-carboxylate + L-aspartate + ATP = (2S)-2-[5-amino-1-(5-phospho-beta-D-ribosyl)imidazole-4-carboxamido]succinate + ADP + phosphate + 2 H(+). The protein operates within purine metabolism; IMP biosynthesis via de novo pathway; 5-amino-1-(5-phospho-D-ribosyl)imidazole-4-carboxamide from 5-amino-1-(5-phospho-D-ribosyl)imidazole-4-carboxylate: step 1/2. The protein is Phosphoribosylaminoimidazole-succinocarboxamide synthase of Clostridium perfringens (strain SM101 / Type A).